We begin with the raw amino-acid sequence, 94 residues long: Protein S100-A1 (94 aa).

G2 is subject to Blocked amino end (Gly). EF-hand domains are found at residues I13–A48 and K50–A85. Residues K28, E33, D63, N65, D67, E69, and E74 each coordinate Ca(2+). C86 is modified (S-nitrosocysteine).

This sequence belongs to the S-100 family. As to quaternary structure, dimer of either two alpha chains, or two beta chains, or one alpha and one beta chain. Also forms heterodimers with S100P. Interacts with AGER. Interacts with CAPZA1. Interacts with FKBP4. Interacts with RYR1 and RYR2. Interacts with CACYBP in a calcium-dependent manner. Interacts with PPP5C (via TPR repeats); the interaction is calcium-dependent and modulates PPP5C activity. Interacts with ATP2A2 and PLN in a Ca(2+)-dependent manner. Interacts with mitochondrial F1-ATPase subunits ATP5F1A and ATP5F1B; these interactions increase F1-ATPase activity. Glutathionylated; glutathionylation increases affinity to calcium about 10-fold. Although predominant among the water-soluble brain proteins, S100 is also found in a variety of other tissues.

The protein resides in the cytoplasm. It is found in the sarcoplasmic reticulum. It localises to the mitochondrion. Small calcium binding protein that plays important roles in several biological processes such as Ca(2+) homeostasis, chondrocyte biology and cardiomyocyte regulation. In response to an increase in intracellular Ca(2+) levels, binds calcium which triggers conformational changes. These changes allow interactions with specific target proteins and modulate their activity. Regulates a network in cardiomyocytes controlling sarcoplasmic reticulum Ca(2+) cycling and mitochondrial function through interaction with the ryanodine receptors RYR1 and RYR2, sarcoplasmic reticulum Ca(2+)-ATPase/ATP2A2 and mitochondrial F1-ATPase. Facilitates diastolic Ca(2+) dissociation and myofilament mechanics in order to improve relaxation during diastole. This chain is Protein S100-A1 (S100A1), found in Bos taurus (Bovine).